Reading from the N-terminus, the 196-residue chain is Guanylate kinase (196 aa).

Residues 7 to 191 (RNIVLLVGPS…AAEEIEKIIL (185 aa)) enclose the Guanylate kinase-like domain. 14 to 21 (GPSGVGKG) contacts ATP.

It belongs to the guanylate kinase family.

Its subcellular location is the cytoplasm. The catalysed reaction is GMP + ATP = GDP + ADP. Functionally, essential for recycling GMP and indirectly, cGMP. This chain is Guanylate kinase, found in Mycoplasmopsis pulmonis (strain UAB CTIP) (Mycoplasma pulmonis).